The sequence spans 1465 residues: MITANKGLSLVLLIPNLFALVSGGLQYVFDVRRRIFRPHFSQFWTIWMKFFSIALVIITQIYVGYKTKNIGWNFFSVVTYCFVLFLQFAEQSTLRVPMASLLIFWLLKVVTSLLILLFSPYIAITSMARLLTLITLFCSLVCFISEVYVPPCNRVWYSDDTNEVEEKGIRPSEVRYANIFSKLSFSWISSFIKFGYTNYLKESDVWLLPPDERSGNLIIGFEDWWIYHSKNKRRSLFLWKLLFFNHWKLVALITITKLIQDVLAFVQPTLIQKTILFISSYTSPNPESPSRGFIIAILVLVANFLQTLLLQQYNQLIMLLGMRWKTELLASIYRKSLLLSSSARQNRSIGDIINYMAVDTQKISDLPIYLFIIVSGPFQIALALSNLYHLMGYSAFTGVAASVILFPCNIIVANVYKKFQSILMKNKDSRSKLMTEIINNIRSIKLYAWETPFLQKLLHIRNTKELSMLKKIGFITAIGDFAWIFTTIIVTTVAFGAFIIFHGKTQALTADIVFPAVSLFNLLQFPLAMLPTVISSLLEASVSVSRIYEFLIAQELDYNGVQRFPATEIPHEICLEIKSGTFSWSKKTLKQQVTPTLRQINFVAKNGELTCIFGKVGAGKSSLLEACMGNMYKNSGSVFQCGSLAYAAQQPWIFDATIRENILFGSEFDPELYEKTIHACCLKRDFEIFTEGDQTEVGQKGASLSGGQKSRISLARAIYSQADIYLLDDVLSSVDQHVSRDLIKNLFGPEGFLRTHCVVLTTNSLNVLKEADSIYILSNGKIVEKGNYEHLFVSTNSELKQQLSEFNDEKDTQPLPEHTTSYPSTQISLAPSIHVEGLETYSSSERKDSSNKYKSRKRNPIRQKVTEDDKGKCVAQTDELVQRGKVKWHVYWMYFKSCSIGLILLYFFFIISGIMMNVATNVWLKHWSEENGKSSSELNPSPYFYLGIYLFFGFLSCAFISSSSLTMTVLCGIRSGRYLHDSMLKTILRAPMGFFETTSSGRILNRFSNDVYKVDEVVSLTFMFFFRNSIQVLFILGVICYSAPLSLLLIVPLFFLYLYNRAYYVRTSRELKRLDNVTRSPLYAHVQESLSGLSTIRAYGMQETFVEENDLRIDTNHRVWFMFFSSSRWQAIRVECIGDLIIFCTAFYGILSAIKGSPNPGLVGFSLSYAIQITQGLSFIVQQSVDAENNTVSVERILEYINVKSEAPEIIPENRPPCEWPTDGAVSFNHYSAKYREDLSFALNNINIEISPREKIGIVGRTGAGKSTLAMALFRIIEPTEGKIEIDNEDITKFGLYDLRSRLSIIPQESQIFEGNIRENLDPNHRLTDKKIWEVLEIASLKNCISQLEDGLYSRVAEGGANFSSGQRQLICLARVLLTSTRILLLDEATASVHAETDAIVQQTIRKRFKDRTILTVAHRINTVMDSDRILVLDHGKVVEFDATKKLLENKDSMFYSLAKESGLI.

Residues 1–8 are Extracellular-facing; that stretch reads MITANKGL. The chain crosses the membrane as a helical span at residues 9 to 29; sequence SLVLLIPNLFALVSGGLQYVF. At 30-42 the chain is on the cytoplasmic side; it reads DVRRRIFRPHFSQ. The helical transmembrane segment at 43 to 63 threads the bilayer; sequence FWTIWMKFFSIALVIITQIYV. Topologically, residues 64–69 are extracellular; sequence GYKTKN. Residues 70–90 form a helical membrane-spanning segment; it reads IGWNFFSVVTYCFVLFLQFAE. At 91–97 the chain is on the cytoplasmic side; sequence QSTLRVP. Residues 98–118 form a helical membrane-spanning segment; sequence MASLLIFWLLKVVTSLLILLF. The Extracellular portion of the chain corresponds to 119–129; sequence SPYIAITSMAR. Residues 130 to 150 traverse the membrane as a helical segment; it reads LLTLITLFCSLVCFISEVYVP. 151-152 is a binding site for heme; that stretch reads PC. The Cytoplasmic segment spans residues 151 to 235; the sequence is PCNRVWYSDD…IYHSKNKRRS (85 aa). A helical transmembrane segment spans residues 236-256; that stretch reads LFLWKLLFFNHWKLVALITIT. The ABC transmembrane type-1 1 domain maps to 250–539; the sequence is VALITITKLI…LPTVISSLLE (290 aa). The Extracellular segment spans residues 257-291; it reads KLIQDVLAFVQPTLIQKTILFISSYTSPNPESPSR. Residues 292 to 312 form a helical membrane-spanning segment; it reads GFIIAILVLVANFLQTLLLQQ. The Cytoplasmic portion of the chain corresponds to 313 to 362; the sequence is YNQLIMLLGMRWKTELLASIYRKSLLLSSSARQNRSIGDIINYMAVDTQK. The chain crosses the membrane as a helical span at residues 363-383; it reads ISDLPIYLFIIVSGPFQIALA. The Extracellular segment spans residues 384–394; it reads LSNLYHLMGYS. A helical membrane pass occupies residues 395 to 415; it reads AFTGVAASVILFPCNIIVANV. Over 416–480 the chain is Cytoplasmic; that stretch reads YKKFQSILMK…KIGFITAIGD (65 aa). The chain crosses the membrane as a helical span at residues 481–501; that stretch reads FAWIFTTIIVTTVAFGAFIIF. The Extracellular segment spans residues 502–511; it reads HGKTQALTAD. Residues 512–532 form a helical membrane-spanning segment; that stretch reads IVFPAVSLFNLLQFPLAMLPT. The Cytoplasmic segment spans residues 533–899; that stretch reads VISSLLEASV…VYWMYFKSCS (367 aa). Residues 575–804 form the ABC transporter 1 domain; sequence LEIKSGTFSW…TNSELKQQLS (230 aa). 614 to 621 contacts ATP; that stretch reads GKVGAGKS. 2 disordered regions span residues 805–824 and 840–869; these read EFND…SYPS and TYSS…TEDD. The helical transmembrane segment at 900–920 threads the bilayer; sequence IGLILLYFFFIISGIMMNVAT. An ABC transmembrane type-1 2 domain is found at 903 to 1189; the sequence is ILLYFFFIIS…IVQQSVDAEN (287 aa). Residues 921-939 are Extracellular-facing; that stretch reads NVWLKHWSEENGKSSSELN. The helical transmembrane segment at 940–960 threads the bilayer; it reads PSPYFYLGIYLFFGFLSCAFI. Topologically, residues 961–1033 are cytoplasmic; sequence SSSSLTMTVL…FFFRNSIQVL (73 aa). Residues 1034–1054 form a helical membrane-spanning segment; sequence FILGVICYSAPLSLLLIVPLF. Over 1055 to 1465 the chain is Extracellular; it reads FLYLYNRAYY…YSLAKESGLI (411 aa). Residues 1226-1460 enclose the ABC transporter 2 domain; sequence VSFNHYSAKY…KDSMFYSLAK (235 aa). Residue 1260-1267 participates in ATP binding; sequence GRTGAGKS.

Belongs to the ABC transporter superfamily.

Its subcellular location is the vacuole membrane. Its function is as follows. Iron-regulated vacuolar transporter that mobilizes stored heme from the vacuole to the cytosol in response to iron deficiency. The polypeptide is Vacuolar heme ABC transmembrane exporter abc3 (Schizosaccharomyces pombe (strain 972 / ATCC 24843) (Fission yeast)).